The sequence spans 553 residues: Transcriptional regulator HilA (553 aa).

The segment at residues 11 to 107 (NKKFVFDDFI…LYGQGYRFNR (97 aa)) is a DNA-binding region (ompR/PhoB-type). 4-aspartylphosphate is present on Asp-62. One copy of the TPR repeat lies at 372-405 (ADIKYYYGWNLFMAGQLEEALQTINECLKLDPTR).

The main transcriptional regulator of the Salmonella pathogenicity island 1 (SPI1) gene expression. Activates the expression of invasion genes by a direct action at their promoters and also indirectly by increasing the level of invF. Also binds upstream of prgH and directly activates the expression of prgHIJK operon. The polypeptide is Transcriptional regulator HilA (hilA) (Salmonella typhi).